The primary structure comprises 287 residues: 4-hydroxybenzoate octaprenyltransferase (287 aa).

Helical transmembrane passes span 41–61, 92–112, 133–153, 160–180, 218–238, and 267–287; these read LPLLVIFTVGTVLMRSAGCAI, VALAAALSLLAFLLILPLNAL, FFAIPQAYLGIAFGFGIPMAF, VPMLAWVMLLANVFWSVAYDT, LGIYVGIGVLLGFGALYWLGW, and NNWLGGALFAGIAAHYAATWF.

It belongs to the UbiA prenyltransferase family. Mg(2+) serves as cofactor.

It is found in the cell inner membrane. It catalyses the reaction all-trans-octaprenyl diphosphate + 4-hydroxybenzoate = 4-hydroxy-3-(all-trans-octaprenyl)benzoate + diphosphate. It functions in the pathway cofactor biosynthesis; ubiquinone biosynthesis. Functionally, catalyzes the prenylation of para-hydroxybenzoate (PHB) with an all-trans polyprenyl group. Mediates the second step in the final reaction sequence of ubiquinone-8 (UQ-8) biosynthesis, which is the condensation of the polyisoprenoid side chain with PHB, generating the first membrane-bound Q intermediate 3-octaprenyl-4-hydroxybenzoate. This Paraburkholderia xenovorans (strain LB400) protein is 4-hydroxybenzoate octaprenyltransferase.